A 318-amino-acid chain; its full sequence is NADH-ubiquinone oxidoreductase chain 1 (318 aa).

Transmembrane regions (helical) follow at residues 2–22, 68–88, 100–120, 146–166, 171–191, 231–251, 253–273, and 294–314; these read PMAN…FLML, ITLY…LWTP, LGLL…LWSG, LAII…STLI, HLWL…STLA, IIMM…DALS, ELYT…FLWI, and LPLT…ISSI.

This sequence belongs to the complex I subunit 1 family. Core subunit of respiratory chain NADH dehydrogenase (Complex I) which is composed of 45 different subunits.

Its subcellular location is the mitochondrion inner membrane. It carries out the reaction a ubiquinone + NADH + 5 H(+)(in) = a ubiquinol + NAD(+) + 4 H(+)(out). Its function is as follows. Core subunit of the mitochondrial membrane respiratory chain NADH dehydrogenase (Complex I) which catalyzes electron transfer from NADH through the respiratory chain, using ubiquinone as an electron acceptor. Essential for the catalytic activity and assembly of complex I. The sequence is that of NADH-ubiquinone oxidoreductase chain 1 (MT-ND1) from Homo sapiens (Human).